Here is a 282-residue protein sequence, read N- to C-terminus: BURP domain-containing protein BNM2A (282 aa).

Residues Met1–Ala26 form the signal peptide. The BURP domain maps to Phe60–Lys282.

In terms of tissue distribution, expressed in the radicle and cotyledon of germinating seeds 2 days post-imbibition (DPI), in stems and roots of 30-DPI young plants and in floral buds, but not in fully open flowers or leaves. Expressed in the embryo and seed coat tissues of developing seeds. The protein accumulates only in seeds and only long after transcript accumulation becomes evident.

It is found in the protein storage vacuole. The polypeptide is BURP domain-containing protein BNM2A (Brassica napus (Rape)).